The chain runs to 88 residues: Small ribosomal subunit protein bS20 (88 aa).

The segment at 1–27 is disordered; it reads MANSKTAKKRAIQSEKRRQHNASRRSM.

The protein belongs to the bacterial ribosomal protein bS20 family.

Functionally, binds directly to 16S ribosomal RNA. The polypeptide is Small ribosomal subunit protein bS20 (Shewanella amazonensis (strain ATCC BAA-1098 / SB2B)).